The sequence spans 407 residues: Bifunctional enzyme IspD/IspF (407 aa).

Residues 1 to 246 (MTEASENASA…SSERTHFPDI (246 aa)) form a 2-C-methyl-D-erythritol 4-phosphate cytidylyltransferase region. Residues 247–407 (RTGNGYDVHA…SVVFPGEVPE (161 aa)) form a 2-C-methyl-D-erythritol 2,4-cyclodiphosphate synthase region. Asp253 and His255 together coordinate a divalent metal cation. Residues 253–255 (DVH) and 279–280 (HS) each bind 4-CDP-2-C-methyl-D-erythritol 2-phosphate. His287 lines the a divalent metal cation pocket. 4-CDP-2-C-methyl-D-erythritol 2-phosphate is bound by residues 301 to 303 (DIG), 377 to 380 (TTNE), Phe384, and Arg387.

This sequence in the N-terminal section; belongs to the IspD/TarI cytidylyltransferase family. IspD subfamily. The protein in the C-terminal section; belongs to the IspF family. A divalent metal cation serves as cofactor.

It catalyses the reaction 2-C-methyl-D-erythritol 4-phosphate + CTP + H(+) = 4-CDP-2-C-methyl-D-erythritol + diphosphate. The catalysed reaction is 4-CDP-2-C-methyl-D-erythritol 2-phosphate = 2-C-methyl-D-erythritol 2,4-cyclic diphosphate + CMP. Its pathway is isoprenoid biosynthesis; isopentenyl diphosphate biosynthesis via DXP pathway; isopentenyl diphosphate from 1-deoxy-D-xylulose 5-phosphate: step 2/6. It functions in the pathway isoprenoid biosynthesis; isopentenyl diphosphate biosynthesis via DXP pathway; isopentenyl diphosphate from 1-deoxy-D-xylulose 5-phosphate: step 4/6. In terms of biological role, bifunctional enzyme that catalyzes the formation of 4-diphosphocytidyl-2-C-methyl-D-erythritol from CTP and 2-C-methyl-D-erythritol 4-phosphate (MEP) (IspD), and catalyzes the conversion of 4-diphosphocytidyl-2-C-methyl-D-erythritol 2-phosphate (CDP-ME2P) to 2-C-methyl-D-erythritol 2,4-cyclodiphosphate (ME-CPP) with a corresponding release of cytidine 5-monophosphate (CMP) (IspF). The chain is Bifunctional enzyme IspD/IspF from Mesorhizobium japonicum (strain LMG 29417 / CECT 9101 / MAFF 303099) (Mesorhizobium loti (strain MAFF 303099)).